Consider the following 385-residue polypeptide: Proteinase-activated receptor 4 (385 aa).

A signal peptide spans methionine 1–serine 17. The propeptide at glycine 18–arginine 47 is removed for receptor activation. The segment at glutamine 21 to isoleucine 42 is disordered. Topologically, residues glycine 48 to alanine 82 are extracellular. Residue asparagine 56 is glycosylated (N-linked (GlcNAc...) asparagine). The chain crosses the membrane as a helical span at residues leucine 83–alanine 103. Residues threonine 104–arginine 108 lie on the Cytoplasmic side of the membrane. Residues leucine 109–leucine 129 traverse the membrane as a helical segment. Residues proline 130–leucine 151 are Extracellular-facing. Cysteine 149 and cysteine 228 are oxidised to a cystine. A helical membrane pass occupies residues alanine 152–leucine 172. Topologically, residues aspartate 173 to leucine 192 are cytoplasmic. Residues alanine 193–leucine 213 form a helical membrane-spanning segment. The Extracellular segment spans residues glutamine 214–cysteine 247. Residues leucine 248–leucine 268 traverse the membrane as a helical segment. The Cytoplasmic segment spans residues histidine 269–arginine 283. A helical transmembrane segment spans residues leucine 284 to leucine 304. Residues leucine 305–tyrosine 319 lie on the Extracellular side of the membrane. The chain crosses the membrane as a helical span at residues glycine 320–valine 343. Topologically, residues serine 344–glutamine 385 are cytoplasmic. Residues aspartate 362 to glutamine 385 are disordered.

The protein belongs to the G-protein coupled receptor 1 family. In terms of processing, a proteolytic cleavage generates a new N-terminus that functions as a tethered ligand. Widely expressed, with highest levels in lung, pancreas, thyroid, testis and small intestine. Not expressed in brain, kidney, spinal cord and peripheral blood leukocytes. Also detected in platelets.

The protein localises to the cell membrane. Activated upon interaction by mucunain, a cowhage (Mucuna pruriens) plant cysteine proteinase. Functionally, receptor for activated thrombin or trypsin coupled to G proteins that stimulate phosphoinositide hydrolysis. May play a role in platelets activation. The sequence is that of Proteinase-activated receptor 4 (F2RL3) from Homo sapiens (Human).